Consider the following 139-residue polypeptide: MKKGTVLNSEISSVISRLGHTDTLVVCDAGLPIPNSTARIDMALTQGVPSFMQVVDVVTWEMQVEAAILATEIKQQNPQLHETLLTHLEQLQQHQGNTIKISYTTHEQFKKLTADSQAVIRSGECSPYANVIICAGVTF.

His-20 functions as the Proton donor in the catalytic mechanism. Residues Asp-28, His-106, and 128–130 each bind substrate; that span reads YAN.

This sequence belongs to the RbsD / FucU family. RbsD subfamily. As to quaternary structure, homodecamer.

The protein resides in the cytoplasm. The enzyme catalyses beta-D-ribopyranose = beta-D-ribofuranose. It functions in the pathway carbohydrate metabolism; D-ribose degradation; D-ribose 5-phosphate from beta-D-ribopyranose: step 1/2. In terms of biological role, catalyzes the interconversion of beta-pyran and beta-furan forms of D-ribose. The protein is D-ribose pyranase of Salmonella typhi.